The following is a 434-amino-acid chain: Chaperone SurA (434 aa).

A signal peptide spans 1–20 (MKNWRTLILGLVICANTAFA). 2 PpiC domains span residues 171-272 (DTEL…KVND) and 282-382 (VTEV…QLVD).

The protein localises to the periplasm. The enzyme catalyses [protein]-peptidylproline (omega=180) = [protein]-peptidylproline (omega=0). Its function is as follows. Chaperone involved in the correct folding and assembly of outer membrane proteins. Recognizes specific patterns of aromatic residues and the orientation of their side chains, which are found more frequently in integral outer membrane proteins. May act in both early periplasmic and late outer membrane-associated steps of protein maturation. This Yersinia pestis bv. Antiqua (strain Antiqua) protein is Chaperone SurA.